The chain runs to 422 residues: Glycerol-3-phosphate dehydrogenase [NAD(+)] 2 (422 aa).

NAD(+) is bound by residues 69–74, F157, K180, and A213; that span reads GSGNWG. K180 serves as a coordination point for substrate. K273 (proton acceptor) is an active-site residue. NAD(+) contacts are provided by R338 and Q367. 338–339 provides a ligand contact to substrate; sequence RN.

The protein belongs to the NAD-dependent glycerol-3-phosphate dehydrogenase family.

It carries out the reaction sn-glycerol 3-phosphate + NAD(+) = dihydroxyacetone phosphate + NADH + H(+). This Candida glabrata (strain ATCC 2001 / BCRC 20586 / JCM 3761 / NBRC 0622 / NRRL Y-65 / CBS 138) (Yeast) protein is Glycerol-3-phosphate dehydrogenase [NAD(+)] 2 (GPD2).